We begin with the raw amino-acid sequence, 1135 residues long: Vinculin (1135 aa).

An N-terminal globular head region spans residues 2 to 835 (PVFHTRTIES…GAVAKVREAF (834 aa)). The residue at position 100 (Y100) is a Phosphotyrosine. The tract at residues 168–208 (MTKMAKMIDERQQELTHQEHRVMLVNSMNTVKELLPVLISA) is talin-interaction. 3 repeat units span residues 259 to 369 (ASKD…KVEN), 370 to 479 (AARK…KTNR), and 480 to 589 (AVAN…RMQE). The tract at residues 259-589 (ASKDTEAMKR…LKDLKARMQE (331 aa)) is 3 X 112 AA tandem repeats. Phosphotyrosine occurs at positions 537 and 822. A linker (Pro-rich) region spans residues 836–878 (QPQEPDFPPPPPDLEHLHLTDELAPPKPPLPEGEVPPPRPPPP). The tract at residues 837-888 (PQEPDFPPPPPDLEHLHLTDELAPPKPPLPEGEVPPPRPPPPEEKDEEFPEQ) is disordered. The segment covering 860 to 876 (PPKPPLPEGEVPPPRPP) has biased composition (pro residues). Residues 879-1135 (EEKDEEFPEQ…RWVRKTPWYQ (257 aa)) form a C-terminal tail region. 2 facilitates phospholipid membrane insertion regions span residues 1004–1047 (RLVR…KRIR) and 1121–1135 (AGFT…PWYQ). The residue at position 1134 (Y1134) is a Phosphotyrosine; by SRC-type Tyr-kinases.

This sequence belongs to the vinculin/alpha-catenin family. As to quaternary structure, exhibits self-association properties. Interacts with APBB1IP, NRAP and TLN1. Interacts with CTNNB1 and this interaction is necessary for its localization to the cell-cell junctions and for its function in regulating cell surface expression of E-cadherin. Phosphorylated; on serines, threonines and tyrosines. Phosphorylation on Tyr-1134 in activated platelets affects head-tail interactions and cell spreading but has no effect on actin binding nor on localization to focal adhesion plaques. In terms of processing, acetylated; mainly by myristic acid but also by a small amount of palmitic acid. Isoform Metavinculin is muscle-specific.

Its subcellular location is the cell membrane. It localises to the cell junction. It is found in the adherens junction. The protein resides in the focal adhesion. The protein localises to the cytoplasm. Its subcellular location is the cytoskeleton. It localises to the sarcolemma. It is found in the cell projection. The protein resides in the podosome. In terms of biological role, actin filament (F-actin)-binding protein involved in cell-matrix adhesion and cell-cell adhesion. Regulates cell-surface E-cadherin expression and potentiates mechanosensing by the E-cadherin complex. May also play important roles in cell morphology and locomotion. This chain is Vinculin (VCL), found in Gallus gallus (Chicken).